The chain runs to 652 residues: DNA ligase (652 aa).

Residues 29-33 (DSEYD), 78-79 (SL), and Glu-107 each bind NAD(+). The active-site N6-AMP-lysine intermediate is the Lys-109. NAD(+) is bound by residues Arg-130, Glu-164, Lys-278, and Lys-302. The Zn(2+) site is built by Cys-395, Cys-398, Cys-413, and Cys-418. Positions 577–652 (VADAALSGLT…VRDEAWLESL (76 aa)) constitute a BRCT domain.

The protein belongs to the NAD-dependent DNA ligase family. LigA subfamily. Mg(2+) is required as a cofactor. Requires Mn(2+) as cofactor.

The catalysed reaction is NAD(+) + (deoxyribonucleotide)n-3'-hydroxyl + 5'-phospho-(deoxyribonucleotide)m = (deoxyribonucleotide)n+m + AMP + beta-nicotinamide D-nucleotide.. Functionally, DNA ligase that catalyzes the formation of phosphodiester linkages between 5'-phosphoryl and 3'-hydroxyl groups in double-stranded DNA using NAD as a coenzyme and as the energy source for the reaction. It is essential for DNA replication and repair of damaged DNA. This chain is DNA ligase, found in Streptococcus pneumoniae (strain JJA).